The primary structure comprises 333 residues: Dipeptide transport system permease protein DppB (333 aa).

Helical transmembrane passes span 9–29 (ILMVIPTFIAITLITFALVHF), 103–123 (AFFALFWSLLGGIILGTIAAV), 136–156 (ASLTGYSMPIFWWGLILILYV), 197–217 (AVKSLILPAIVLGTVPLAIIT), 256–276 (LIPVVTVVGLIVAQLLSGAVL), and 306–326 (VLIIATIIIVVNLTVDLLYGV). An ABC transmembrane type-1 domain is found at 96 to 328 (FPATAELAFF…TVDLLYGVVN (233 aa)).

The protein belongs to the binding-protein-dependent transport system permease family. OppBC subfamily.

Its subcellular location is the cell inner membrane. Functionally, part of the ABC transporter DppBCDF involved in dipeptide transport. Responsible for the translocation of the substrate across the membrane. The chain is Dipeptide transport system permease protein DppB (dppB) from Haemophilus influenzae (strain ATCC 51907 / DSM 11121 / KW20 / Rd).